The sequence spans 213 residues: Outer-membrane lipoprotein carrier protein (213 aa).

An N-terminal signal peptide occupies residues 1–23 (MKKLLKQSLLGFALVSMTGAAFA).

This sequence belongs to the LolA family. As to quaternary structure, monomer.

It localises to the periplasm. Participates in the translocation of lipoproteins from the inner membrane to the outer membrane. Only forms a complex with a lipoprotein if the residue after the N-terminal Cys is not an aspartate (The Asp acts as a targeting signal to indicate that the lipoprotein should stay in the inner membrane). This Actinobacillus pleuropneumoniae serotype 7 (strain AP76) protein is Outer-membrane lipoprotein carrier protein.